Here is a 185-residue protein sequence, read N- to C-terminus: MRKDAKENRQRIEEIAHKLFDEEGVENISMNRIAKELGIGMGTLYRHFKDKSDLCYYVIQRDLDIFITHFKQIKDDYHSNYEVMQVSLDYLLQFKIDNKALLQCIEAGNNKLRFYQSAFYQELFDFYYDLFKSDDDTYTKFKTDMLLQSLSTSVFAFQIEHRHISIEAYRNYLLNIYLDEVGRND.

The 61-residue stretch at 6-66 (KENRQRIEEI…YVIQRDLDIF (61 aa)) folds into the HTH tetR-type domain. The H-T-H motif DNA-binding region spans 29 to 48 (SMNRIAKELGIGMGTLYRHF).

This chain is HTH-type transcriptional regulator SACOL2593, found in Staphylococcus aureus (strain COL).